A 469-amino-acid polypeptide reads, in one-letter code: Glutamate--tRNA ligase 2 (469 aa).

The 'HIGH' region signature appears at 10 to 20 (PSPTGFLHIGS). The 'KMSKS' region signature appears at 239 to 243 (KLSKR). Lysine 242 contributes to the ATP binding site.

The protein belongs to the class-I aminoacyl-tRNA synthetase family. Glutamate--tRNA ligase type 1 subfamily. In terms of assembly, monomer.

The protein localises to the cytoplasm. It catalyses the reaction tRNA(Glu) + L-glutamate + ATP = L-glutamyl-tRNA(Glu) + AMP + diphosphate. Catalyzes the attachment of glutamate to tRNA(Glu) in a two-step reaction: glutamate is first activated by ATP to form Glu-AMP and then transferred to the acceptor end of tRNA(Glu). This chain is Glutamate--tRNA ligase 2, found in Rickettsia typhi (strain ATCC VR-144 / Wilmington).